The primary structure comprises 316 residues: MANLFDQLKEFTTIVADTGDVEAIKSVKPYDATTNPSLLLKASTIPQYAPLIDEAIAYAKSQSGDKAQQIEDAADKLAVLIGLEILKHIPGKISTEVDARLSFDTEAMVQKGRKLIKLYEDAGIAKDRVLIKLASTWEGIKAGEILEKEGINCNLTLLFSFAQARACAEAGVFLISPFVGRILDWYKAKTGETYTAETDPGVQSVRKIYAYYKEHGYKTVVMGASFRNTGEIIALAGCDRLTVSPNLLEELKATEGKLERVLVDNGVTKQRPPLLTEKEFRFDLNEDAMATEKLAEGIRGFVVDQNKLEKALAEKL.

The active-site Schiff-base intermediate with substrate is K132.

The protein belongs to the transaldolase family. Type 1 subfamily. In terms of assembly, homodimer.

It localises to the cytoplasm. The catalysed reaction is D-sedoheptulose 7-phosphate + D-glyceraldehyde 3-phosphate = D-erythrose 4-phosphate + beta-D-fructose 6-phosphate. It participates in carbohydrate degradation; pentose phosphate pathway; D-glyceraldehyde 3-phosphate and beta-D-fructose 6-phosphate from D-ribose 5-phosphate and D-xylulose 5-phosphate (non-oxidative stage): step 2/3. Functionally, transaldolase is important for the balance of metabolites in the pentose-phosphate pathway. The sequence is that of Transaldolase from Methylobacillus flagellatus (strain ATCC 51484 / DSM 6875 / VKM B-1610 / KT).